Reading from the N-terminus, the 711-residue chain is Mitochondrial intermediate peptidase (711 aa).

The N-terminal 33 residues, 1 to 33 (MLLAAGARYARRLCGRGAAAALQGRTGRSCARD), are a transit peptide targeting the mitochondrion. An N6-acetyllysine modification is found at Lys-124. His-493 provides a ligand contact to Zn(2+). Residue Glu-494 is part of the active site. Positions 497 and 500 each coordinate Zn(2+).

The protein belongs to the peptidase M3 family. As to quaternary structure, monomer. The cofactor is Zn(2+).

The protein resides in the mitochondrion matrix. It catalyses the reaction Release of an N-terminal octapeptide as second stage of processing of some proteins imported into the mitochondrion.. Activity is divalent cation-dependent. It is stimulated by manganese, magnesium or calcium ions and reversibly inhibited by zinc, cobalt and iron. In terms of biological role, cleaves proteins, imported into the mitochondrion, to their mature size. In Mus musculus (Mouse), this protein is Mitochondrial intermediate peptidase (Mipep).